Consider the following 258-residue polypeptide: Enterotoxin type D (258 aa).

An N-terminal signal peptide occupies residues 1–25 (MKKFNILIALLFFTSLVISPLNVKA). The Zn(2+) site is built by Asp212, His248, His250, and Asp252.

Belongs to the staphylococcal/streptococcal toxin family. In terms of assembly, homodimer; zinc-dependent. Interacts with MHC class II molecules composed of alpha/HLA-DRA and beta/HLA-DRB1 chains. It depends on Zn(2+) as a cofactor.

Its subcellular location is the secreted. In terms of biological role, staphylococcal enterotoxin that activates the host immune system by binding as unprocessed molecules to major histocompatibility (MHC) complex class II and T-cell receptor (TCR) molecules. In turn, this ternary complex activates a large number of T-lymphocytes initiating a systemic release of pro-inflammatory cytokines. In addition, induces B-cell proliferation and differentiation in the presence of T-cells. Causes also the intoxication staphylococcal food poisoning syndrome. The polypeptide is Enterotoxin type D (entD) (Staphylococcus aureus).